A 298-amino-acid polypeptide reads, in one-letter code: CCR4-NOT transcription complex subunit 9 (298 aa).

Belongs to the CNOT9 family. As to quaternary structure, homodimer. Component of the CCR4-NOT complex.

The protein resides in the nucleus. It localises to the cytoplasm. It is found in the P-body. In terms of biological role, component of the CCR4-NOT complex which is one of the major cellular mRNA deadenylases and is linked to various cellular processes including bulk mRNA degradation, miRNA-mediated repression, translational repression during translational initiation and general transcription regulation. Additional complex functions may be a consequence of its influence on mRNA expression. Involved in down-regulation of MYB- and JUN-dependent transcription. Enhances ligand-dependent transcriptional activity of nuclear hormone receptors. May play a role in cell differentiation. The chain is CCR4-NOT transcription complex subunit 9 from Danio rerio (Zebrafish).